Reading from the N-terminus, the 78-residue chain is DNA-directed RNA polymerase subunit Rpo5 (78 aa).

It belongs to the archaeal Rpo5/eukaryotic RPB5 RNA polymerase subunit family. In terms of assembly, part of the RNA polymerase complex.

It localises to the cytoplasm. It catalyses the reaction RNA(n) + a ribonucleoside 5'-triphosphate = RNA(n+1) + diphosphate. Its function is as follows. DNA-dependent RNA polymerase (RNAP) catalyzes the transcription of DNA into RNA using the four ribonucleoside triphosphates as substrates. This Methanothrix thermoacetophila (strain DSM 6194 / JCM 14653 / NBRC 101360 / PT) (Methanosaeta thermophila) protein is DNA-directed RNA polymerase subunit Rpo5.